The chain runs to 189 residues: Keratin-associated protein 5-2 (189 aa).

8 repeat units span residues 21 to 24 (CCKP), 27 to 30 (CCKP), 33 to 36 (CCVP), 134 to 137 (CCKP), 144 to 147 (CCKP), 159 to 162 (CCKP), 169 to 172 (CCKP), and 179 to 182 (CCAP). An 8 X 4 AA repeats of C-C-X-P region spans residues 27-182 (CCKPVCCCVP…CCCQSSCCAP (156 aa)).

This sequence belongs to the KRTAP type 5 family. Interacts with hair keratins.

In the hair cortex, hair keratin intermediate filaments are embedded in an interfilamentous matrix, consisting of hair keratin-associated protein (KRTAP), which are essential for the formation of a rigid and resistant hair shaft through their extensive disulfide bond cross-linking with abundant cysteine residues of hair keratins. The matrix proteins include the high-sulfur and high-glycine-tyrosine keratins. The chain is Keratin-associated protein 5-2 from Mus musculus (Mouse).